The sequence spans 157 residues: 2-C-methyl-D-erythritol 2,4-cyclodiphosphate synthase (157 aa).

A divalent metal cation is bound by residues D8 and H10. 4-CDP-2-C-methyl-D-erythritol 2-phosphate is bound by residues 8–10 and 34–35; these read DVH and HS. Residue H42 participates in a divalent metal cation binding. 4-CDP-2-C-methyl-D-erythritol 2-phosphate is bound by residues 56-58, 61-65, 100-106, 132-135, F139, and R142; these read DIG, FPDTD, AQAPKMA, and TTTE.

Belongs to the IspF family. In terms of assembly, homotrimer. The cofactor is a divalent metal cation.

It carries out the reaction 4-CDP-2-C-methyl-D-erythritol 2-phosphate = 2-C-methyl-D-erythritol 2,4-cyclic diphosphate + CMP. It functions in the pathway isoprenoid biosynthesis; isopentenyl diphosphate biosynthesis via DXP pathway; isopentenyl diphosphate from 1-deoxy-D-xylulose 5-phosphate: step 4/6. Functionally, involved in the biosynthesis of isopentenyl diphosphate (IPP) and dimethylallyl diphosphate (DMAPP), two major building blocks of isoprenoid compounds. Catalyzes the conversion of 4-diphosphocytidyl-2-C-methyl-D-erythritol 2-phosphate (CDP-ME2P) to 2-C-methyl-D-erythritol 2,4-cyclodiphosphate (ME-CPP) with a corresponding release of cytidine 5-monophosphate (CMP). The chain is 2-C-methyl-D-erythritol 2,4-cyclodiphosphate synthase from Pseudomonas aeruginosa (strain UCBPP-PA14).